Reading from the N-terminus, the 125-residue chain is Fluoride-specific ion channel FluC (125 aa).

4 consecutive transmembrane segments (helical) span residues Met-1–Gly-21, Phe-34–Phe-54, Thr-72–Phe-92, and Leu-101–Ile-121. Na(+)-binding residues include Gly-76 and Thr-79.

The protein belongs to the fluoride channel Fluc/FEX (TC 1.A.43) family.

The protein resides in the cell inner membrane. It catalyses the reaction fluoride(in) = fluoride(out). Its activity is regulated as follows. Na(+) is not transported, but it plays an essential structural role and its presence is essential for fluoride channel function. Fluoride-specific ion channel. Important for reducing fluoride concentration in the cell, thus reducing its toxicity. The protein is Fluoride-specific ion channel FluC of Acidithiobacillus ferrooxidans (strain ATCC 23270 / DSM 14882 / CIP 104768 / NCIMB 8455) (Ferrobacillus ferrooxidans (strain ATCC 23270)).